Reading from the N-terminus, the 320-residue chain is Tabersonine synthase (320 aa).

The Involved in the stabilization of the negatively charged intermediate by the formation of the oxyanion hole motif lies at 78 to 80; sequence HGA. Residue Gly-81 participates in (-)-tabersonine binding. Catalysis depends on Ser-170, which acts as the Proton acceptor. Asp-266 is a catalytic residue. Tyr-297 provides a ligand contact to (-)-tabersonine. Tyr-297 acts as the Proton donor/acceptor in catalysis.

The protein belongs to the 'GDXG' lipolytic enzyme family. As to quaternary structure, interacts with dehydroprecondylocarpine acetate synthase (DPAS). As to expression, expressed in leaf epidermis.

Its subcellular location is the cytoplasm. The protein resides in the cytosol. It localises to the nucleus. It catalyses the reaction dehydrosecodine = (-)-tabersonine. The enzyme catalyses dihydroprecondylocarpine acetate = (-)-tabersonine + acetate + H(+). It functions in the pathway alkaloid biosynthesis. In terms of biological role, component of iboga and aspidosperma monoterpenoid indole alkaloids (MIAs, e.g. tabersonine and catharanthine) biosynthesis pathway from 19E-geissoschizine, psychoactive compounds likely to be used in the treatment of opioid dependence. Catalyzes the conversion of dehydrosecodine to tabersonine, a precursor of vindoline; this process starts with the conversion of dihydroprecondylocarpine acetate to dehydrosecodine. The protein is Tabersonine synthase of Catharanthus roseus (Madagascar periwinkle).